We begin with the raw amino-acid sequence, 280 residues long: Ribosomal RNA small subunit methyltransferase A (280 aa).

Asparagine 27, leucine 29, glycine 54, glutamate 76, aspartate 102, and asparagine 122 together coordinate S-adenosyl-L-methionine.

This sequence belongs to the class I-like SAM-binding methyltransferase superfamily. rRNA adenine N(6)-methyltransferase family. RsmA subfamily.

It is found in the cytoplasm. It catalyses the reaction adenosine(1518)/adenosine(1519) in 16S rRNA + 4 S-adenosyl-L-methionine = N(6)-dimethyladenosine(1518)/N(6)-dimethyladenosine(1519) in 16S rRNA + 4 S-adenosyl-L-homocysteine + 4 H(+). Its function is as follows. Specifically dimethylates two adjacent adenosines (A1518 and A1519) in the loop of a conserved hairpin near the 3'-end of 16S rRNA in the 30S particle. May play a critical role in biogenesis of 30S subunits. The protein is Ribosomal RNA small subunit methyltransferase A of Oleidesulfovibrio alaskensis (strain ATCC BAA-1058 / DSM 17464 / G20) (Desulfovibrio alaskensis).